Consider the following 558-residue polypeptide: DEAD-box ATP-dependent RNA helicase 49 (558 aa).

The Q motif motif lies at 16–44 (FSELKPPLSEDIIEALDRSGFEVCTPVQA). A Helicase ATP-binding domain is found at 47 to 226 (IPFLCSHKDV…KAGLRNAMEV (180 aa)). 60 to 67 (AATGSGKT) lines the ATP pocket. Residues 174-177 (DEAD) carry the DEAD box motif. The Helicase C-terminal domain occupies 255 to 402 (QLVHLLIENK…ERKCSENASD (148 aa)). A disordered region spans residues 506 to 558 (KDKLQQEKRGKRKKSSKEAVDDSNKASRKRKLTGRQRQTIQTAQDEEEMNLRL). A compositionally biased stretch (basic and acidic residues) spans 521–530 (SKEAVDDSNK). The segment covering 549 to 558 (QDEEEMNLRL) has biased composition (acidic residues).

The protein belongs to the DEAD box helicase family. DDX55/SPB4 subfamily.

The enzyme catalyses ATP + H2O = ADP + phosphate + H(+). This is DEAD-box ATP-dependent RNA helicase 49 (RH49) from Arabidopsis thaliana (Mouse-ear cress).